Here is a 171-residue protein sequence, read N- to C-terminus: Moubatin (171 aa).

The signal sequence occupies residues 1–15; sequence MMLVLTTLIFSFSAS. 3 cysteine pairs are disulfide-bonded: Cys-23–Cys-144, Cys-55–Cys-166, and Cys-118–Cys-145.

It belongs to the calycin superfamily. Lipocalin family. The N-terminus is blocked. Expressed in salivary glands.

Its subcellular location is the secreted. Tick salivary platelet aggregation inhibitor that plays an important part in the anti-hemostatic strategy of ticks. Acts by scavenging thromboxane A2 (TXA2), a potent inducer of platelet aggregation and blood vessel constriction. As a consequence, is a specific inhibitor of collagen-induced platelet aggregation. In addition, it also acts as a potent inhibitor of TXA2-mediated vasoconstriction. Has also been found to bind leukotriene B4 (LTB4) (which also derives from arachidonic acid, as TXA2) with affinities in the nanomolar range. It does not interact with complement protein C5. This Ornithodoros moubata (Soft tick) protein is Moubatin.